The chain runs to 162 residues: UPF0114 protein Sfri_3655 (162 aa).

Transmembrane regions (helical) follow at residues 15 to 35 (IMAP…IKFF), 53 to 73 (LVLI…LIMV), and 136 to 156 (IMWY…MGYL).

Belongs to the UPF0114 family.

The protein localises to the cell membrane. This chain is UPF0114 protein Sfri_3655, found in Shewanella frigidimarina (strain NCIMB 400).